The primary structure comprises 206 residues: Ribosomal RNA small subunit methyltransferase G (206 aa).

S-adenosyl-L-methionine is bound by residues glycine 74, leucine 79, 125-126 (VE), and arginine 140.

The protein belongs to the methyltransferase superfamily. RNA methyltransferase RsmG family.

The protein resides in the cytoplasm. It carries out the reaction guanosine(527) in 16S rRNA + S-adenosyl-L-methionine = N(7)-methylguanosine(527) in 16S rRNA + S-adenosyl-L-homocysteine. Specifically methylates the N7 position of guanine in position 527 of 16S rRNA. This is Ribosomal RNA small subunit methyltransferase G from Shewanella woodyi (strain ATCC 51908 / MS32).